Here is a 553-residue protein sequence, read N- to C-terminus: Glucose-6-phosphate isomerase (553 aa).

Glu355 serves as the catalytic Proton donor. Residues His386 and Lys513 contribute to the active site.

The protein belongs to the GPI family.

The protein localises to the cytoplasm. The catalysed reaction is alpha-D-glucose 6-phosphate = beta-D-fructose 6-phosphate. It functions in the pathway carbohydrate biosynthesis; gluconeogenesis. It participates in carbohydrate degradation; glycolysis; D-glyceraldehyde 3-phosphate and glycerone phosphate from D-glucose: step 2/4. In terms of biological role, catalyzes the reversible isomerization of glucose-6-phosphate to fructose-6-phosphate. The protein is Glucose-6-phosphate isomerase of Baumannia cicadellinicola subsp. Homalodisca coagulata.